A 366-amino-acid chain; its full sequence is Ribosomal RNA large subunit methyltransferase M (366 aa).

S-adenosyl-L-methionine is bound by residues Ser187, 220–223 (SPGG), Asp239, Asp259, and Asp276. Lys305 serves as the catalytic Proton acceptor.

It belongs to the class I-like SAM-binding methyltransferase superfamily. RNA methyltransferase RlmE family. RlmM subfamily. As to quaternary structure, monomer.

The protein localises to the cytoplasm. It carries out the reaction cytidine(2498) in 23S rRNA + S-adenosyl-L-methionine = 2'-O-methylcytidine(2498) in 23S rRNA + S-adenosyl-L-homocysteine + H(+). Its function is as follows. Catalyzes the 2'-O-methylation at nucleotide C2498 in 23S rRNA. This Tolumonas auensis (strain DSM 9187 / NBRC 110442 / TA 4) protein is Ribosomal RNA large subunit methyltransferase M.